Here is a 602-residue protein sequence, read N- to C-terminus: Bifunctional lycopene cyclase/phytoene synthase (602 aa).

Residues 1–241 (MYDYAFVHLK…IVGGMAAFDQ (241 aa)) form a lycopene beta-cyclase region. 7 helical membrane passes run 6-26 (FVHL…AYPI), 30-50 (IHLI…LPWD), 76-96 (FEEL…YILF), 118-138 (VVKV…WNAA), 146-166 (YLGL…TLAG), 168-188 (FILS…TFYL), and 230-250 (MLIV…YAFP). Residues 248–602 (AFPTLFPKVN…STLLRALYEQ (355 aa)) form a phytoene synthase region.

In the N-terminal section; belongs to the lycopene beta-cyclase family. This sequence in the C-terminal section; belongs to the phytoene/squalene synthase family.

It localises to the membrane. The enzyme catalyses all-trans-lycopene = gamma-carotene. The catalysed reaction is gamma-carotene = all-trans-beta-carotene. It carries out the reaction 2 (2E,6E,10E)-geranylgeranyl diphosphate = 15-cis-phytoene + 2 diphosphate. The protein operates within carotenoid biosynthesis; beta-carotene biosynthesis. It functions in the pathway carotenoid biosynthesis; phytoene biosynthesis; all-trans-phytoene from geranylgeranyl diphosphate: step 1/1. Its function is as follows. Bifunctional enzyme that catalyzes the reactions from geranylgeranyl diphosphate to phytoene (phytoene synthase) and from lycopene to beta-carotene via the intermediate gamma-carotene and from 3,4-didehydrolycopene to torulene (lycopene cyclase). Torulene is further processed to the acidic carotenoid neurosporaxanthin. The cyclase preferentially catalyzes single cyclizations at only one end of the substrate to produce monocyclic carotenoids. Neurosporaxanthin is synthesized from geranyl-geranyl pyrophosphate (GGPP) through several enzymatic activities. Phytoene synthase activity performed by the bifunctional enzyme al-2 first produces phytoene from geranyl-geranyl pyrophosphate (GGPP). The phytoene dehydrogenase al-1 then introduces 5 desaturations to lead to 3,4-didehydrolycopene via the intermediates phytofluene, zeta-carotene, neurosporene and lycopene. Al-2 cyclase activity then converts 3,4-didehydrolycopene into torulene. Al-2 can also convet lycopene into gamma-carotene which in turn is converted to beta-carotene by an additional al-2 cyclization reaction. Torulene is the substrate of the dioxidase cao-2 that breaks the molecule, removing five carbon atoms to yield beta-apo-4'-carotenal, whereas the aldehyde dehydrogenase ylo-1 mediates the last step by converting beta-apo-4'-carotenal into neurosporaxanthin. This is Bifunctional lycopene cyclase/phytoene synthase from Neurospora crassa (strain ATCC 24698 / 74-OR23-1A / CBS 708.71 / DSM 1257 / FGSC 987).